Here is a 500-residue protein sequence, read N- to C-terminus: L-arabinose isomerase (500 aa).

Mn(2+) contacts are provided by Glu306, Glu333, His350, and His450.

It belongs to the arabinose isomerase family. In terms of assembly, homohexamer. The cofactor is Mn(2+).

The enzyme catalyses beta-L-arabinopyranose = L-ribulose. Its pathway is carbohydrate degradation; L-arabinose degradation via L-ribulose; D-xylulose 5-phosphate from L-arabinose (bacterial route): step 1/3. In terms of biological role, catalyzes the conversion of L-arabinose to L-ribulose. This Yersinia pestis bv. Antiqua (strain Nepal516) protein is L-arabinose isomerase.